We begin with the raw amino-acid sequence, 292 residues long: 31 kDa ribonucleoprotein, chloroplastic (292 aa).

In terms of domain architecture, RRM 1 spans 88–166 (LKLFVGNLPF…RAIRVNAGPA (79 aa)). The segment at 165–203 (PAPAKRENSSFGGGRGGNSSYGGGRDGNSSFGGARGGRS) is disordered. Residues 167–207 (PAKRENSSFGGGRGGNSSYGGGRDGNSSFGGARGGRSVDSS) form a linker (Gly-rich) region. Over residues 175 to 190 (FGGGRGGNSSYGGGRD) the composition is skewed to gly residues. An RRM 2 domain is found at 208 to 286 (NRVYVGNLSW…RSIRVSAAEE (79 aa)).

As to expression, expressed at high levels in the leaves and seedlings, and lower levels are seen in the stems and roots.

The protein resides in the plastid. The protein localises to the chloroplast. The sequence is that of 31 kDa ribonucleoprotein, chloroplastic from Nicotiana plumbaginifolia (Leadwort-leaved tobacco).